Reading from the N-terminus, the 708-residue chain is Exocyst complex component 5 (708 aa).

At A2 the chain carries N-acetylalanine. Residues K40–E101 adopt a coiled-coil conformation. Residues T122, T395, and T405 each carry the phosphothreonine modification. At S412 the chain carries Phosphoserine.

It belongs to the SEC10 family. In terms of assembly, the exocyst complex is composed of EXOC1, EXOC2, EXOC3, EXOC4, EXOC5, EXOC6, EXOC7 and EXOC8. Interacts with EXOC3L1. In terms of tissue distribution, ubiquitous.

Its subcellular location is the cytoplasm. It is found in the midbody. In terms of biological role, component of the exocyst complex involved in the docking of exocytic vesicles with fusion sites on the plasma membrane. The protein is Exocyst complex component 5 (EXOC5) of Homo sapiens (Human).